We begin with the raw amino-acid sequence, 1191 residues long: Putative glycoside hydrolase 22789 (1191 aa).

The span at 173–187 shows a compositional bias: low complexity; that stretch reads PSSSGASSVLPSPSA. The tract at residues 173–221 is disordered; sequence PSSSGASSVLPSPSAHTPDAATDANHLPNPDPASGRQELTRAGRPARKK.

It belongs to the glycoside hydrolase-like 3 (GHL3) family.

This chain is Putative glycoside hydrolase 22789, found in Monosiga brevicollis (Choanoflagellate).